A 205-amino-acid polypeptide reads, in one-letter code: Thymidylate kinase (205 aa).

Gly-11 to Thr-18 provides a ligand contact to ATP.

It belongs to the thymidylate kinase family. As to quaternary structure, homodimer; the dimer arrangement is orthogonal and not antiparallel as in human enzyme.

It carries out the reaction dTMP + ATP = dTDP + ADP. Its pathway is pyrimidine metabolism; dTTP biosynthesis. In terms of biological role, poxvirus TMP kinase is able to phosphorylate dTMP, dUMP and also dGMP from any purine and pyrimidine nucleoside triphosphate. The large substrate specificity is explained by the presence of a canal connecting the edge of the dimer interface to the TMP base binding pocket, canal not found in the human homolog. This is Thymidylate kinase (OPG178) from Homo sapiens (Human).